Consider the following 79-residue polypeptide: Acyl carrier protein (79 aa).

In terms of domain architecture, Carrier spans 3–78 (QEILEKVCSI…DAVKFIEEKK (76 aa)). At Ser-38 the chain carries O-(pantetheine 4'-phosphoryl)serine.

It belongs to the acyl carrier protein (ACP) family. 4'-phosphopantetheine is transferred from CoA to a specific serine of apo-ACP by AcpS. This modification is essential for activity because fatty acids are bound in thioester linkage to the sulfhydryl of the prosthetic group.

The protein resides in the cytoplasm. It participates in lipid metabolism; fatty acid biosynthesis. Functionally, carrier of the growing fatty acid chain in fatty acid biosynthesis. The chain is Acyl carrier protein from Prochlorococcus marinus (strain MIT 9301).